A 104-amino-acid polypeptide reads, in one-letter code: Large ribosomal subunit protein bL21 (104 aa).

It belongs to the bacterial ribosomal protein bL21 family. As to quaternary structure, part of the 50S ribosomal subunit. Contacts protein L20.

Its function is as follows. This protein binds to 23S rRNA in the presence of protein L20. The sequence is that of Large ribosomal subunit protein bL21 from Helicobacter pylori (strain HPAG1).